The primary structure comprises 41 residues: Large ribosomal subunit protein bL32c (41 aa).

The protein belongs to the bacterial ribosomal protein bL32 family.

It is found in the plastid. The chain is Large ribosomal subunit protein bL32c (rpl32) from Helicosporidium sp. subsp. Simulium jonesii (Green alga).